A 123-amino-acid chain; its full sequence is MSPDKTEDEDKDVNVDQDQFNEEEESLGRVILPNKKKGEMFGIVEKMEGASRLSVMCEDGYTRNARIPGRMRKRMWIREKDLVIVKPWEFQPEKADVVYRYTKTQASYLSRNHMLPEVIDIFK.

A compositionally biased stretch (acidic residues) spans 1 to 11 (MSPDKTEDEDK). Residues 1-26 (MSPDKTEDEDKDVNVDQDQFNEEEES) are disordered. An S1-like domain is found at 28–102 (GRVILPNKKK…EKADVVYRYT (75 aa)).

The protein belongs to the eIF-1A family.

Seems to be required for maximal rate of protein biosynthesis. Enhances ribosome dissociation into subunits and stabilizes the binding of the initiator Met-tRNA(I) to 40 S ribosomal subunits. This chain is Translation initiation factor 1A (eIF1A), found in Thermoplasma volcanium (strain ATCC 51530 / DSM 4299 / JCM 9571 / NBRC 15438 / GSS1).